The following is a 194-amino-acid chain: A-type ATP synthase subunit E (194 aa).

This sequence belongs to the V-ATPase E subunit family. As to quaternary structure, has multiple subunits with at least A(3), B(3), C, D, E, F, H, I and proteolipid K(x).

The protein resides in the cell membrane. Its function is as follows. Component of the A-type ATP synthase that produces ATP from ADP in the presence of a proton gradient across the membrane. The polypeptide is A-type ATP synthase subunit E (Haloferax volcanii (strain ATCC 29605 / DSM 3757 / JCM 8879 / NBRC 14742 / NCIMB 2012 / VKM B-1768 / DS2) (Halobacterium volcanii)).